Reading from the N-terminus, the 385-residue chain is Lipid-A-disaccharide synthase (385 aa).

This sequence belongs to the LpxB family.

It carries out the reaction a lipid X + a UDP-2-N,3-O-bis[(3R)-3-hydroxyacyl]-alpha-D-glucosamine = a lipid A disaccharide + UDP + H(+). The protein operates within bacterial outer membrane biogenesis; LPS lipid A biosynthesis. Its function is as follows. Condensation of UDP-2,3-diacylglucosamine and 2,3-diacylglucosamine-1-phosphate to form lipid A disaccharide, a precursor of lipid A, a phosphorylated glycolipid that anchors the lipopolysaccharide to the outer membrane of the cell. In Rickettsia canadensis (strain McKiel), this protein is Lipid-A-disaccharide synthase.